A 160-amino-acid polypeptide reads, in one-letter code: MARKKKQDKGQGPKTIAQNRRARHDYHIEDTYEAGLVLTGTEVKSLRAGRASLVDGFAQIKNGEVWLHNVHIPEYTMGTWTNHAPRRPRKLLLHREEIAKLDAKTREAGRTLVPLSLYFRNGRAKVEIALARGKREYDKRHDIAEREAKREMERALRRRR.

A disordered region spans residues 1–23; sequence MARKKKQDKGQGPKTIAQNRRAR.

Belongs to the SmpB family.

The protein resides in the cytoplasm. Functionally, required for rescue of stalled ribosomes mediated by trans-translation. Binds to transfer-messenger RNA (tmRNA), required for stable association of tmRNA with ribosomes. tmRNA and SmpB together mimic tRNA shape, replacing the anticodon stem-loop with SmpB. tmRNA is encoded by the ssrA gene; the 2 termini fold to resemble tRNA(Ala) and it encodes a 'tag peptide', a short internal open reading frame. During trans-translation Ala-aminoacylated tmRNA acts like a tRNA, entering the A-site of stalled ribosomes, displacing the stalled mRNA. The ribosome then switches to translate the ORF on the tmRNA; the nascent peptide is terminated with the 'tag peptide' encoded by the tmRNA and targeted for degradation. The ribosome is freed to recommence translation, which seems to be the essential function of trans-translation. The polypeptide is SsrA-binding protein (Thermobifida fusca (strain YX)).